Here is a 174-residue protein sequence, read N- to C-terminus: Gamma-crystallin A (174 aa).

Beta/gamma crystallin 'Greek key' domains are found at residues 2–40 (GKIT…RVDS) and 41–83 (GCWM…RSIP). The interval 84 to 87 (YTSS) is connecting peptide. 2 consecutive Beta/gamma crystallin 'Greek key' domains span residues 88 to 128 (HRIR…HVLE) and 129 to 171 (GSWV…RRVM).

The protein belongs to the beta/gamma-crystallin family.

In terms of biological role, crystallins are the dominant structural components of the vertebrate eye lens. In Rattus norvegicus (Rat), this protein is Gamma-crystallin A (Cryga).